Reading from the N-terminus, the 969-residue chain is RNA polymerase-associated protein RapA (969 aa).

The Helicase ATP-binding domain maps to 164-334 (EVGRRYAPRV…FARLRLLDPD (171 aa)). 177-184 (DEVGLGKT) contacts ATP. The DEAH box motif lies at 280 to 283 (DEAH). A Helicase C-terminal domain is found at 492-668 (RVNWLLELLK…GKSDGLESLI (177 aa)).

It belongs to the SNF2/RAD54 helicase family. RapA subfamily. Interacts with the RNAP. Has a higher affinity for the core RNAP than for the holoenzyme. Its ATPase activity is stimulated by binding to RNAP.

In terms of biological role, transcription regulator that activates transcription by stimulating RNA polymerase (RNAP) recycling in case of stress conditions such as supercoiled DNA or high salt concentrations. Probably acts by releasing the RNAP, when it is trapped or immobilized on tightly supercoiled DNA. Does not activate transcription on linear DNA. Probably not involved in DNA repair. The sequence is that of RNA polymerase-associated protein RapA from Aliivibrio fischeri (strain MJ11) (Vibrio fischeri).